A 374-amino-acid polypeptide reads, in one-letter code: Peptide chain release factor 2 (374 aa).

Q250 carries the post-translational modification N5-methylglutamine.

The protein belongs to the prokaryotic/mitochondrial release factor family. Methylated by PrmC. Methylation increases the termination efficiency of RF2.

Its subcellular location is the cytoplasm. In terms of biological role, peptide chain release factor 2 directs the termination of translation in response to the peptide chain termination codons UGA and UAA. The sequence is that of Peptide chain release factor 2 from Roseobacter denitrificans (strain ATCC 33942 / OCh 114) (Erythrobacter sp. (strain OCh 114)).